The following is a 298-amino-acid chain: Probable endonuclease 4 (298 aa).

H69, H111, E146, D180, H183, H215, D228, H230, and E260 together coordinate Zn(2+).

It belongs to the AP endonuclease 2 family. Zn(2+) serves as cofactor.

The catalysed reaction is Endonucleolytic cleavage to 5'-phosphooligonucleotide end-products.. Endonuclease IV plays a role in DNA repair. It cleaves phosphodiester bonds at apurinic or apyrimidinic (AP) sites, generating a 3'-hydroxyl group and a 5'-terminal sugar phosphate. The polypeptide is Probable endonuclease 4 (Bacillus cereus (strain AH820)).